The following is a 317-amino-acid chain: Small ribosomal subunit protein uS2 (317 aa).

Disordered stretches follow at residues 1–30 (MENE…ASKE) and 293–317 (RSFE…EVAE). The segment covering 18-30 (MAEKADDSKASKE) has biased composition (basic and acidic residues). A compositionally biased stretch (low complexity) spans 308–317 (KTTTSTEVAE).

Belongs to the universal ribosomal protein uS2 family.

The protein is Small ribosomal subunit protein uS2 of Mycoplasmopsis agalactiae (strain NCTC 10123 / CIP 59.7 / PG2) (Mycoplasma agalactiae).